A 186-amino-acid chain; its full sequence is Akirin-1 (186 aa).

Positions 1-64 (MACGATLKRS…PLPQLGGDRR (64 aa)) are disordered. Positions 22–27 (PKRRRC) match the Nuclear localization signal motif. Positions 49–60 (QQGQQQPLPQLG) are enriched in low complexity. Positions 183 to 186 (SYVS) match the SYVS motif motif.

The protein belongs to the akirin family.

The protein resides in the nucleus. Its function is as follows. Molecular adapter that acts as a bridge between proteins, and which is involved skeletal muscle development. Functions as a signal transducer for MSTN during skeletal muscle regeneration and myogenesis. The chain is Akirin-1 from Xenopus tropicalis (Western clawed frog).